A 98-amino-acid polypeptide reads, in one-letter code: Citrate lyase acyl carrier protein (98 aa).

At serine 14 the chain carries O-(phosphoribosyl dephospho-coenzyme A)serine.

The protein belongs to the CitD family. Oligomer with a subunit composition of (alpha,beta,gamma)6.

It is found in the cytoplasm. Functionally, covalent carrier of the coenzyme of citrate lyase. This is Citrate lyase acyl carrier protein from Salmonella arizonae (strain ATCC BAA-731 / CDC346-86 / RSK2980).